The primary structure comprises 556 residues: Phosphoenolpyruvate-protein phosphotransferase (556 aa).

H186 acts as the Tele-phosphohistidine intermediate in catalysis. The phosphoenolpyruvate site is built by R288 and R325. Positions 415 and 439 each coordinate Mg(2+). Residues 438-439 (ND) and R449 each bind phosphoenolpyruvate. The active-site Proton donor is C486.

The protein belongs to the PEP-utilizing enzyme family. Homodimer. Mg(2+) is required as a cofactor.

It localises to the cytoplasm. It carries out the reaction L-histidyl-[protein] + phosphoenolpyruvate = N(pros)-phospho-L-histidyl-[protein] + pyruvate. In terms of biological role, general (non sugar-specific) component of the phosphoenolpyruvate-dependent sugar phosphotransferase system (sugar PTS). This major carbohydrate active-transport system catalyzes the phosphorylation of incoming sugar substrates concomitantly with their translocation across the cell membrane. Enzyme I transfers the phosphoryl group from phosphoenolpyruvate (PEP) to the phosphoryl carrier protein (HPr). This is Phosphoenolpyruvate-protein phosphotransferase (ptsI) from Streptomyces coelicolor (strain ATCC BAA-471 / A3(2) / M145).